Here is a 247-residue protein sequence, read N- to C-terminus: MTLDFALSQDAAVPAFTEEPVNPSPLAVSVRGLQRRYGARVVIDALDLDIREGEFVALLGESGCGKTTLLRALAGLDLPDAGQIRAPERPSVVFQEHRLLPWATLWENVALGHETTVGRAGAARALAEVGLSGREDDWPRNLSGGQAQRVALARGLARDPALLLLDEPFAALDALTRIKMHGLVKELVARHHPGVLLVTHDVDEALTLADRILVMRSGRIAASFQPETHTPQALRSILLEELGVQSL.

The region spanning 28–242 is the ABC transporter domain; sequence VSVRGLQRRY…ALRSILLEEL (215 aa). 60–67 lines the ATP pocket; the sequence is GESGCGKT.

Belongs to the ABC transporter superfamily. Aliphatic sulfonates importer (TC 3.A.1.17.2) family. In terms of assembly, the complex is composed of two ATP-binding proteins (SsuB), two transmembrane proteins (SsuC) and a solute-binding protein (SsuA).

The protein localises to the cell inner membrane. The enzyme catalyses ATP + H2O + aliphatic sulfonate-[sulfonate-binding protein]Side 1 = ADP + phosphate + aliphatic sulfonateSide 2 + [sulfonate-binding protein]Side 1.. Functionally, part of the ABC transporter complex SsuABC involved in aliphatic sulfonates import. Responsible for energy coupling to the transport system. The protein is Aliphatic sulfonates import ATP-binding protein SsuB 3 of Paraburkholderia xenovorans (strain LB400).